The following is a 172-amino-acid chain: Putative defense protein (172 aa).

A signal peptide spans 1 to 21 (MKLVVAAVLAMAASRWRRLSA). Positions 22-172 (HGQVPSSTCA…LRQLDNAVAA (151 aa)) constitute a Reelin domain.

It belongs to the insect defense protein family. As to expression, in adults, in hemolymph.

Its subcellular location is the secreted. May have antimicrobial activity. The chain is Putative defense protein from Locusta migratoria (Migratory locust).